Reading from the N-terminus, the 193-residue chain is MKKVQDFYFKKAKEENYKARSVFKLEEAQNKFKFIKASDNVLDVGCSPGSFSQYMLNKILKSGSVVGVDILPNSFAHQRFTFILGDIKDMDVTTFNNTLFDVVVSDAMPNTTSDRETNHFRSISLCRSIFDLAKEVLKENGNFFIKVFDGKDLQDFKKELSEYFNSVNVFKPKSSRDESREIFLFCKNFKKLR.

S-adenosyl-L-methionine contacts are provided by glycine 49, phenylalanine 51, aspartate 69, aspartate 86, and aspartate 106. Lysine 146 serves as the catalytic Proton acceptor.

Belongs to the class I-like SAM-binding methyltransferase superfamily. RNA methyltransferase RlmE family.

The protein localises to the cytoplasm. It carries out the reaction uridine(2552) in 23S rRNA + S-adenosyl-L-methionine = 2'-O-methyluridine(2552) in 23S rRNA + S-adenosyl-L-homocysteine + H(+). Its function is as follows. Specifically methylates the uridine in position 2552 of 23S rRNA at the 2'-O position of the ribose in the fully assembled 50S ribosomal subunit. This is Ribosomal RNA large subunit methyltransferase E from Brachyspira hyodysenteriae (strain ATCC 49526 / WA1).